A 420-amino-acid chain; its full sequence is Glucose-1-phosphate adenylyltransferase (420 aa).

Residues Y107, G172, 187-188 (EK), and S205 contribute to the alpha-D-glucose 1-phosphate site.

The protein belongs to the bacterial/plant glucose-1-phosphate adenylyltransferase family. Homotetramer.

It catalyses the reaction alpha-D-glucose 1-phosphate + ATP + H(+) = ADP-alpha-D-glucose + diphosphate. It participates in glycan biosynthesis; glycogen biosynthesis. Involved in the biosynthesis of ADP-glucose, a building block required for the elongation reactions to produce glycogen. Catalyzes the reaction between ATP and alpha-D-glucose 1-phosphate (G1P) to produce pyrophosphate and ADP-Glc. In Sinorhizobium fredii (strain NBRC 101917 / NGR234), this protein is Glucose-1-phosphate adenylyltransferase.